The chain runs to 442 residues: F-box/FBD/LRR-repeat protein At2g26030 (442 aa).

An F-box domain is found at 3-49 (CDRICELPDSLLTQVLSYLPTIDSVKTSVLSKRWEFLWLRVPVLDLK). LRR repeat units lie at residues 128–160 (CNTL…HLED), 162–187 (WYYD…VLIR), 188–214 (PIDF…RLTF), 234–260 (YLNF…DIDS), 278–309 (KRDI…DRYS), and 324–352 (QAAV…ILDF). The 53-residue stretch at 358–410 (PEQDGLTYVPQCLLSSLECVEIRELIMGEETGEKLVRYFLKNSVVLKKLILRL) folds into the FBD domain.

The sequence is that of F-box/FBD/LRR-repeat protein At2g26030 from Arabidopsis thaliana (Mouse-ear cress).